The sequence spans 226 residues: MYNIIFLGPPGSGKGTQAHLISTKYGISNISAGEILKHALSVTKFHFNFNTDNMLNQINSGNLVDDELIIPLIIKRIRQDDCKKGFILDGFPRTIGQAIAIEQNKIAIDFVIEFNISDSAIINRIVGRQVHIKSGRTYHIKFNPPKLDGIDDITGEKLVIRADDNAQVILQRLNQYRKYTIFLSDYYQKQSQQGNMRYFIINGNQEITKIYKELINIFNFHIFKMN.

Residue 11-16 coordinates ATP; sequence GSGKGT. The tract at residues 31–64 is NMP; it reads SAGEILKHALSVTKFHFNFNTDNMLNQINSGNLV. Residues 62–64, 90–93, and glutamine 97 each bind AMP; these read NLV and GFPR. The segment at 127–164 is LID; sequence GRQVHIKSGRTYHIKFNPPKLDGIDDITGEKLVIRADD. Residues arginine 128 and 137–138 contribute to the ATP site; that span reads TY. Residues arginine 161 and arginine 172 each contribute to the AMP site. Glutamine 205 is an ATP binding site.

Belongs to the adenylate kinase family. Monomer.

The protein resides in the cytoplasm. It carries out the reaction AMP + ATP = 2 ADP. It functions in the pathway purine metabolism; AMP biosynthesis via salvage pathway; AMP from ADP: step 1/1. Functionally, catalyzes the reversible transfer of the terminal phosphate group between ATP and AMP. Plays an important role in cellular energy homeostasis and in adenine nucleotide metabolism. The sequence is that of Adenylate kinase from Blochmanniella floridana.